The sequence spans 443 residues: Na(+)-translocating NADH-quinone reductase subunit A (443 aa).

This sequence belongs to the NqrA family. In terms of assembly, composed of six subunits; NqrA, NqrB, NqrC, NqrD, NqrE and NqrF.

The enzyme catalyses a ubiquinone + n Na(+)(in) + NADH + H(+) = a ubiquinol + n Na(+)(out) + NAD(+). In terms of biological role, NQR complex catalyzes the reduction of ubiquinone-1 to ubiquinol by two successive reactions, coupled with the transport of Na(+) ions from the cytoplasm to the periplasm. NqrA to NqrE are probably involved in the second step, the conversion of ubisemiquinone to ubiquinol. The sequence is that of Na(+)-translocating NADH-quinone reductase subunit A from Mannheimia succiniciproducens (strain KCTC 0769BP / MBEL55E).